The sequence spans 346 residues: tRNA pseudouridine synthase D (346 aa).

The active-site Nucleophile is D83. The TRUD domain maps to 159 to 305; sequence GVPNYFGEQR…LKQERRALRV (147 aa).

It belongs to the pseudouridine synthase TruD family.

The catalysed reaction is uridine(13) in tRNA = pseudouridine(13) in tRNA. In terms of biological role, responsible for synthesis of pseudouridine from uracil-13 in transfer RNAs. This chain is tRNA pseudouridine synthase D, found in Hydrogenovibrio crunogenus (strain DSM 25203 / XCL-2) (Thiomicrospira crunogena).